We begin with the raw amino-acid sequence, 276 residues long: F-actin-capping protein subunit beta (276 aa).

The protein belongs to the F-actin-capping protein beta subunit family. Component of the F-actin capping complex, composed of a heterodimer of an alpha and a beta subunit. Subunit of dynactin, a multiprotein complex part of a tripartite complex with dynein and a adapter, such as BICDL1, BICD2 or HOOK3.

Its subcellular location is the cytoplasm. It localises to the cytoskeleton. In terms of biological role, F-actin-capping proteins bind in a Ca(2+)-independent manner to the fast growing ends of actin filaments (barbed end) thereby blocking the exchange of subunits at these ends. Unlike other capping proteins (such as gelsolin and severin), these proteins do not sever actin filaments. Forms, with CAPZB, the barbed end of the fast growing ends of actin filaments in the dynactin complex and stabilizes dynactin structure. The dynactin multiprotein complex activates the molecular motor dynein for ultra-processive transport along microtubules. The polypeptide is F-actin-capping protein subunit beta (cpb) (Drosophila melanogaster (Fruit fly)).